A 386-amino-acid polypeptide reads, in one-letter code: Putative F-box/kelch-repeat protein At3g17280 (386 aa).

Residues 1 to 48 enclose the F-box domain; it reads MTTISDLPYDLLPEILSRLPTKSIPKLKTTCKKWYALFKDPKFVEKKL. Kelch repeat units follow at residues 155 to 203 and 340 to 386; these read SYKI…LKES and RIYI…IVEV.

The sequence is that of Putative F-box/kelch-repeat protein At3g17280 from Arabidopsis thaliana (Mouse-ear cress).